A 275-amino-acid chain; its full sequence is Large ribosomal subunit protein uL2 (275 aa).

The tract at residues 222-275 (GKVMNPVDHPHGGGEGRNPIGRNPSTPWGKLAMGVKTRGNKKSDRLIVKRRNKK) is disordered.

Belongs to the universal ribosomal protein uL2 family. Part of the 50S ribosomal subunit. Forms a bridge to the 30S subunit in the 70S ribosome.

In terms of biological role, one of the primary rRNA binding proteins. Required for association of the 30S and 50S subunits to form the 70S ribosome, for tRNA binding and peptide bond formation. It has been suggested to have peptidyltransferase activity; this is somewhat controversial. Makes several contacts with the 16S rRNA in the 70S ribosome. In Desulforamulus reducens (strain ATCC BAA-1160 / DSM 100696 / MI-1) (Desulfotomaculum reducens), this protein is Large ribosomal subunit protein uL2.